A 174-amino-acid chain; its full sequence is Peptide methionine sulfoxide reductase MsrA (174 aa).

Cys10 is a catalytic residue.

This sequence belongs to the MsrA Met sulfoxide reductase family.

It catalyses the reaction L-methionyl-[protein] + [thioredoxin]-disulfide + H2O = L-methionyl-(S)-S-oxide-[protein] + [thioredoxin]-dithiol. The catalysed reaction is [thioredoxin]-disulfide + L-methionine + H2O = L-methionine (S)-S-oxide + [thioredoxin]-dithiol. In terms of biological role, has an important function as a repair enzyme for proteins that have been inactivated by oxidation. Catalyzes the reversible oxidation-reduction of methionine sulfoxide in proteins to methionine. The sequence is that of Peptide methionine sulfoxide reductase MsrA from Arthrobacter sp. (strain FB24).